Here is a 492-residue protein sequence, read N- to C-terminus: MAQLGEQTLPGPETTVQIRVAIQEAEDLEDLEEEDEGTSARAAGDPARYLSPGWGSASEEEPSRGHSSATTSGGENDREDLEPEWRPPDEELIRKLVDQIEFYFSDENLEKDAFLLKHVRRNKLGYVSVKLLTSFKKVKHLTRDWRTTAHALKYSVTLELNEDHRKVRRTTPVPLFPNENLPSKMLLVYDLHLSPKLWALATPQKNGRVQEKVMEHLLKLFGTFGVISSVRILKPGRELPPDIRRISSRYSQVGTQECAIVEFEEVDAAIKAHEFMVTESQSKENMKAVLIGMKPPKKKPLKDKNHDDEATAGTHLSRSLNKRVEELQYMGDESSANSSSDPESNPTSPMAGRRHAASNKLSPSGHQNIFLSPNASPCSSPWSSPLAQRKGVSRKSPLAEEGRLNFSTSPEIFRKCMDYSSDSSITPSGSPWVRRRRQAEMGTQEKSPGASPLLSRRMQTADGLPVGVLRLPRGPDNTRGFHGGHERGRACV.

Residues 1–87 (MAQLGEQTLP…REDLEPEWRP (87 aa)) are disordered. Residue Ala-2 is modified to N-acetylalanine. The segment covering 24 to 37 (EAEDLEDLEEEDEG) has biased composition (acidic residues). Phosphoserine occurs at positions 56 and 58. Residues 65–74 (GHSSATTSGG) are compositionally biased toward polar residues. In terms of domain architecture, HTH La-type RNA-binding spans 86–177 (RPPDEELIRK…RRTTPVPLFP (92 aa)). Positions 184–296 (KMLLVYDLHL…KAVLIGMKPP (113 aa)) constitute an RRM domain. Residues 186 to 193 (LLVYDLHL) carry the Nuclear export signal motif. 2 disordered regions span residues 292–398 (GMKP…KSPL) and 466–492 (VGVL…RACV). Positions 296-302 (PKKKPLK) match the Nuclear localization signal motif. A compositionally biased stretch (low complexity) spans 332 to 346 (DESSANSSSDPESNP). Residues 359 to 386 (NKLSPSGHQNIFLSPNASPCSSPWSSPL) are compositionally biased toward polar residues. Positions 427–485 (PSGSPWVRRRRQAEMGTQEKSPGASPLLSRRMQTADGLPVGVLRLPRGPDNTRGFHGGH) constitute an SUZ-C domain. Residues 483 to 492 (GGHERGRACV) are compositionally biased toward basic and acidic residues.

Interacts (via the HTH domain) with VIM/vimentin. Interacts (via C-terminus) with non-muscle myosin MYH10. Interacts (via C-terminus) with DHX9. In terms of tissue distribution, expressed in numerous tissues. Highest expression in heart and brain, intermediate in kidney, skeletal muscle and testis, lowest expression in testis (at protein level).

It is found in the cytoplasm. The protein localises to the nucleus. Its function is as follows. Regulates the coordinated translation of type I collagen alpha-1 and alpha-2 mRNAs, CO1A1 and CO1A2. Stabilizes mRNAs through high-affinity binding of a stem-loop structure in their 5' UTR. This regulation requires VIM and MYH10 filaments, and the helicase DHX9. This is La-related protein 6 (Larp6) from Mus musculus (Mouse).